We begin with the raw amino-acid sequence, 210 residues long: ATP-dependent Clp protease proteolytic subunit (210 aa).

The active-site Nucleophile is the serine 106. Histidine 131 is an active-site residue.

The protein belongs to the peptidase S14 family. As to quaternary structure, fourteen ClpP subunits assemble into 2 heptameric rings which stack back to back to give a disk-like structure with a central cavity, resembling the structure of eukaryotic proteasomes.

It is found in the cytoplasm. The catalysed reaction is Hydrolysis of proteins to small peptides in the presence of ATP and magnesium. alpha-casein is the usual test substrate. In the absence of ATP, only oligopeptides shorter than five residues are hydrolyzed (such as succinyl-Leu-Tyr-|-NHMec, and Leu-Tyr-Leu-|-Tyr-Trp, in which cleavage of the -Tyr-|-Leu- and -Tyr-|-Trp bonds also occurs).. Cleaves peptides in various proteins in a process that requires ATP hydrolysis. Has a chymotrypsin-like activity. Plays a major role in the degradation of misfolded proteins. This chain is ATP-dependent Clp protease proteolytic subunit, found in Rhodopseudomonas palustris (strain BisB18).